The primary structure comprises 177 residues: Ribosome maturation factor RimM (177 aa).

Positions 104–177 (GVDGIWADLI…IIKVKLMEGM (74 aa)) constitute a PRC barrel domain.

This sequence belongs to the RimM family. Binds ribosomal protein uS19.

Its subcellular location is the cytoplasm. In terms of biological role, an accessory protein needed during the final step in the assembly of 30S ribosomal subunit, possibly for assembly of the head region. Essential for efficient processing of 16S rRNA. May be needed both before and after RbfA during the maturation of 16S rRNA. It has affinity for free ribosomal 30S subunits but not for 70S ribosomes. In Magnetococcus marinus (strain ATCC BAA-1437 / JCM 17883 / MC-1), this protein is Ribosome maturation factor RimM.